The sequence spans 117 residues: Large ribosomal subunit protein bL20 (117 aa).

It belongs to the bacterial ribosomal protein bL20 family.

Functionally, binds directly to 23S ribosomal RNA and is necessary for the in vitro assembly process of the 50S ribosomal subunit. It is not involved in the protein synthesizing functions of that subunit. The polypeptide is Large ribosomal subunit protein bL20 (Ruminiclostridium cellulolyticum (strain ATCC 35319 / DSM 5812 / JCM 6584 / H10) (Clostridium cellulolyticum)).